The following is an 89-amino-acid chain: Protein WFDC9 (89 aa).

An N-terminal signal peptide occupies residues Met-1–Gly-23.

It localises to the secreted. This chain is Protein WFDC9 (WFDC9), found in Homo sapiens (Human).